A 534-amino-acid polypeptide reads, in one-letter code: uncharacterized protein (534 aa).

The first 22 residues, 1-22 (MGLRLLFSLICVFCISNIFTQA), serve as a signal peptide directing secretion. Asparagine 31 carries an N-linked (GlcNAc...) asparagine glycan. Disordered stretches follow at residues 70-145 (PTYY…SSVS) and 176-418 (SSLS…SSAP). Asparagine 426 carries an N-linked (GlcNAc...) asparagine glycan.

It is found in the endoplasmic reticulum. The protein resides in the cell membrane. This is an uncharacterized protein from Schizosaccharomyces pombe (strain 972 / ATCC 24843) (Fission yeast).